Consider the following 55-residue polypeptide: Lantibiotic epilancin (55 aa).

Residues 1 to 24 (MNNSLFDLNLNKGVETQKSDLSPQ) constitute a propeptide, cleaved by ElxP. Ser25 is subject to D-lactate; by the dehydratase ElxB and the dehydrogenase ElxO. Residue Ser27 is modified to 2,3-didehydroalanine (Ser); by the dehydratase ElxB. A 2,3-didehydrobutyrine; by the dehydratase ElxB modification is found at Thr31. Ser32 is subject to 2,3-didehydroalanine (Ser); by the dehydratase ElxB. A cross-link (lanthionine (Ser-Cys); by the dehydratase ElxB and the cyclase ElxC) is located at residues 36–40 (SKKYC). 2 cross-links (beta-methyllanthionine (Thr-Cys); by the dehydratase ElxB and the cyclase ElxC) span residues 44-47 (TLTC) and 46-49 (TCGC). Residue Thr52 is modified to 2,3-didehydrobutyrine; by the dehydratase ElxB.

It belongs to the type A lantibiotic family. Post-translationally, maturation of this lantibiotic involves the enzymatic conversion of Thr, and Ser into dehydrated AA by ElxB and the formation of thioether bonds with cysteine by the cyclase ElxC. The next steps are cleavage of the leader peptide by ElxP and membrane translocation by ElxT. The leader peptide may be removed before membrane translocation, in contrast to other lantibiotics for which the cleavage occur after translocation. This is suggested by the probable cytoplasmic localization of the serine protease ElxP that cleaves the leader peptide. It is not established whether the 2,3-didehydrobutyrine is the E- or Z-isomer. In terms of processing, the N-terminal D-lactate is probably produced by dehydration of Ser-25 by ElxB, followed by proteolytic removal of the leader peptide by the serine protease ElxP and hydrolysis of the resulting new N-terminal dehydroalanine. This hydrolysis may occur spontaneously. The pyruvate group thus formed is reduced to D-lactate by the NADPH-dependent oxidoreductase ElxO. This N-terminal D-lactate protects the lantibiotic against degradation against aminopeptidase.

Lanthionine-containing peptide antibiotic (lantibiotic) active on Gram-positive bacteria such as staphylococci, enterococci and streptococci. The bactericidal activity of lantibiotics is based on depolarization of energized bacterial cytoplasmic membranes, initiated by the formation of aqueous transmembrane pores. The protein is Lantibiotic epilancin (elkA) of Staphylococcus epidermidis.